The sequence spans 142 residues: MLLSADDKKHIKAIMPAIAAHGDKFGGEALYRMFIVNPKTKTYFPSFDFHHNSKQISAHGKKVVDALNEASNHLDNIAGSMSKLSDLHAYDLRVDPGNFPLLAHNILVVVAMNFPKQFDPATHKALDKFLATVSTVLTSKYR.

In terms of domain architecture, Globin spans 2-142 (LLSADDKKHI…VSTVLTSKYR (141 aa)). H59 contacts O2. Position 88 (H88) interacts with heme b.

Belongs to the globin family. Heterotetramer of two alpha chains and two beta chains. Red blood cells.

Functionally, involved in oxygen transport from the lung to the various peripheral tissues. The protein is Hemoglobin subunit alpha-1 (hba1) of Xenopus laevis (African clawed frog).